The chain runs to 390 residues: Flagellar P-ring protein (390 aa).

An N-terminal signal peptide occupies residues 1-36 (MFFSRKIRSLLLTPKRRWSLILTLCLIFTGINFSTS).

It belongs to the FlgI family. The basal body constitutes a major portion of the flagellar organelle and consists of four rings (L,P,S, and M) mounted on a central rod.

The protein localises to the periplasm. Its subcellular location is the bacterial flagellum basal body. Functionally, assembles around the rod to form the L-ring and probably protects the motor/basal body from shearing forces during rotation. This chain is Flagellar P-ring protein, found in Desulfotalea psychrophila (strain LSv54 / DSM 12343).